The following is a 356-amino-acid chain: Histidinol-phosphate aminotransferase (356 aa).

K214 carries the post-translational modification N6-(pyridoxal phosphate)lysine.

It belongs to the class-II pyridoxal-phosphate-dependent aminotransferase family. Histidinol-phosphate aminotransferase subfamily. In terms of assembly, homodimer. The cofactor is pyridoxal 5'-phosphate.

It catalyses the reaction L-histidinol phosphate + 2-oxoglutarate = 3-(imidazol-4-yl)-2-oxopropyl phosphate + L-glutamate. Its pathway is amino-acid biosynthesis; L-histidine biosynthesis; L-histidine from 5-phospho-alpha-D-ribose 1-diphosphate: step 7/9. This Escherichia coli O81 (strain ED1a) protein is Histidinol-phosphate aminotransferase.